Consider the following 409-residue polypeptide: MDLKMLLIFTAFLLPAVLGFPIQDNYENSTATSESTQVTTEESIYDSPSPTETDSEDDVIFNRILEVNKDSSRYLQEGDIVPRRSRSAFNCRNCYWPQSMDGIVRIPYVLDPTYEENHVRGILEAMAEFETLTCINFVKRKTERDYLIIRSADGCWSNYGKVGGGQTVSVMKGGCMWKGIIQHELDHALGFLHEHSRSDRDKYVKIMWEYISPACRPDFRKFENSNNLGLPYDYSSVMHYGPHTFTNTTGKATIVPVPDGSVHIGQRLGLSNLDVAKINKLYNCSRCSTIIDAAFGSLKSANYPRNYSDNTNCVWLIRTRSRKISLHFRDFDLRRTRGCQGDYVKVYDGSSKYSPVLMNKTCGSQIPTDVVSSSSLMLIEFVTDGRDTASGFQATFTSARMQRRFNTRN.

Positions 1 to 19 (MDLKMLLIFTAFLLPAVLG) are cleaved as a signal peptide. A propeptide spanning residues 20–86 (FPIQDNYENS…EGDIVPRRSR (67 aa)) is cleaved from the precursor. Positions 30–42 (TATSESTQVTTEE) are enriched in low complexity. The disordered stretch occupies residues 30 to 55 (TATSESTQVTTEESIYDSPSPTETDS). The 199-residue stretch at 87–285 (SAFNCRNCYW…AKINKLYNCS (199 aa)) folds into the Peptidase M12A domain. Intrachain disulfides connect C91–C94, C134–C284, C155–C175, C287–C313, and C339–C362. Zn(2+) is bound at residue H183. E184 is an active-site residue. Residues H187 and H193 each coordinate Zn(2+). Positions 287-399 (CSTIIDAAFG…SGFQATFTSA (113 aa)) constitute a CUB domain.

The cofactor is Zn(2+).

It localises to the cytoplasm. The protein localises to the cell membrane. It is found in the cytoplasmic vesicle. The protein resides in the secretory vesicle. Its subcellular location is the cortical granule. In terms of biological role, probable oocyte-specific oolemmal receptor involved in sperm and egg adhesion and fertilization. Protease which may play a role in the breaking down of the vitelline membrane (days 0-5) and possibly, in the digestion of the egg white (days 9-12). The protein is Astacin-like metalloendopeptidase of Coturnix japonica (Japanese quail).